Consider the following 210-residue polypeptide: Somatotropin (210 aa).

Positions 1 to 23 (MARALVLLSVVLVSLLVNQGTAS) are cleaved as a signal peptide. Residue H38 participates in Zn(2+) binding. C71 and C183 are disulfide-bonded. Residue E192 coordinates Zn(2+). Cysteines 200 and 208 form a disulfide.

The protein belongs to the somatotropin/prolactin family.

Its subcellular location is the secreted. Growth hormone plays an important role in growth control. The polypeptide is Somatotropin (gh) (Ctenopharyngodon idella (Grass carp)).